The following is a 478-amino-acid chain: Ribulose bisphosphate carboxylase large chain (478 aa).

The propeptide occupies 1–2; sequence MS. An N-acetylproline modification is found at Pro-3. At Lys-14 the chain carries N6,N6,N6-trimethyllysine. Residues Asn-123 and Thr-173 each contribute to the substrate site. Lys-175 acts as the Proton acceptor in catalysis. Lys-177 is a substrate binding site. Positions 201, 203, and 204 each coordinate Mg(2+). Lys-201 carries the post-translational modification N6-carboxylysine. His-294 serves as the catalytic Proton acceptor. Substrate-binding residues include Arg-295, His-327, and Ser-379.

Belongs to the RuBisCO large chain family. Type I subfamily. In terms of assembly, heterohexadecamer of 8 large chains and 8 small chains; disulfide-linked. The disulfide link is formed within the large subunit homodimers. The cofactor is Mg(2+). The disulfide bond which can form in the large chain dimeric partners within the hexadecamer appears to be associated with oxidative stress and protein turnover.

It localises to the plastid. Its subcellular location is the chloroplast. The catalysed reaction is 2 (2R)-3-phosphoglycerate + 2 H(+) = D-ribulose 1,5-bisphosphate + CO2 + H2O. It catalyses the reaction D-ribulose 1,5-bisphosphate + O2 = 2-phosphoglycolate + (2R)-3-phosphoglycerate + 2 H(+). Its function is as follows. RuBisCO catalyzes two reactions: the carboxylation of D-ribulose 1,5-bisphosphate, the primary event in carbon dioxide fixation, as well as the oxidative fragmentation of the pentose substrate in the photorespiration process. Both reactions occur simultaneously and in competition at the same active site. The polypeptide is Ribulose bisphosphate carboxylase large chain (Neurachne tenuifolia).